The sequence spans 479 residues: mRNA export factor ICP27 homolog (479 aa).

A compositionally biased stretch (low complexity) spans 1-15 (MVPSQRLSRTSSISS). Disordered regions lie at residues 1 to 77 (MVPS…PSSV) and 91 to 210 (KKWD…NKPW). Over residues 35–44 (TDCDMDPMEG) the composition is skewed to acidic residues. Residues 132-142 (EVHGCTDESYG) are compositionally biased toward basic and acidic residues. Zn(2+)-binding residues include Cys-354, His-445, Cys-449, and Cys-454. Residues 354–454 (CFLPNTRDYN…HTRDCRSASC (101 aa)) form a CHC2-type zinc finger.

This sequence belongs to the HHV-1 ICP27 protein family. In terms of assembly, interacts with host XPO1 and with the XPO1 export pathway components small GTPase RAN and nucleoporin NUP214. Interacts with host SPEN, OTT1 and OTT3. Interacts with host SRSF1, SRSF3, SRSF7 and SRPK1. Interacts with host DHX9; this interaction may have an inhibitory effect on virion production. Interacts (via N-terminus) with host NXF1; this interaction plays a role in mRNA export. Post-translationally, phosphorylated by cellular protein kinase CK2.

The protein resides in the host nucleus. Its subcellular location is the host cytoplasm. Functionally, promotes the nuclear export of a subset of early and late viral mRNAs by interacting with mRNAs and cellular export proteins. Additionally may prevent the establishment of cellular antiviral state, by acting as an alternative splicing factor for cellular RNAs such as STAT1, resulting in a STAT1 mRNA incapable of producing the STAT1alpha isoform. In Homo sapiens (Human), this protein is mRNA export factor ICP27 homolog.